The sequence spans 63 residues: DNA-directed RNA polymerase 7 kDa subunit (63 aa).

Belongs to the poxviridae DNA-directed RNA polymerase 7 kDa subunit family. The DNA-dependent RNA polymerase used for intermediate and late genes expression consists of eight subunits 147 kDa, 133 kDa, 35 kDa, 30 kDa, 22 kDa, 19 kDa, 18 kDa and 7 kDa totalling more than 500 kDa in mass. The same holoenzyme, with the addition of the transcription-specificity factor RAP94, is used for early gene expression.

It is found in the virion. It carries out the reaction RNA(n) + a ribonucleoside 5'-triphosphate = RNA(n+1) + diphosphate. Functionally, part of the DNA-dependent RNA polymerase which catalyzes the transcription of viral DNA into RNA using the four ribonucleoside triphosphates as substrates. Responsible for the transcription of early, intermediate and late genes. DNA-dependent RNA polymerase associates with the early transcription factor (ETF) thereby allowing the early genes transcription. Late transcription, and probably also intermediate transcription, require newly synthesized RNA polymerase. In Molluscum contagiosum virus subtype 1 (MOCV), this protein is DNA-directed RNA polymerase 7 kDa subunit (RPO7).